Here is a 354-residue protein sequence, read N- to C-terminus: Uroporphyrinogen decarboxylase (354 aa).

Residues Arg-27–Arg-31, Phe-46, Asp-77, Tyr-154, Thr-209, and His-327 each bind substrate.

Belongs to the uroporphyrinogen decarboxylase family. As to quaternary structure, homodimer.

It localises to the cytoplasm. It carries out the reaction uroporphyrinogen III + 4 H(+) = coproporphyrinogen III + 4 CO2. It participates in porphyrin-containing compound metabolism; protoporphyrin-IX biosynthesis; coproporphyrinogen-III from 5-aminolevulinate: step 4/4. Catalyzes the decarboxylation of four acetate groups of uroporphyrinogen-III to yield coproporphyrinogen-III. The sequence is that of Uroporphyrinogen decarboxylase from Photorhabdus laumondii subsp. laumondii (strain DSM 15139 / CIP 105565 / TT01) (Photorhabdus luminescens subsp. laumondii).